The primary structure comprises 95 residues: Phosphoribosyl-ATP pyrophosphatase (95 aa).

This sequence belongs to the PRA-PH family.

It is found in the cytoplasm. It catalyses the reaction 1-(5-phospho-beta-D-ribosyl)-ATP + H2O = 1-(5-phospho-beta-D-ribosyl)-5'-AMP + diphosphate + H(+). The protein operates within amino-acid biosynthesis; L-histidine biosynthesis; L-histidine from 5-phospho-alpha-D-ribose 1-diphosphate: step 2/9. In Sulfolobus acidocaldarius (strain ATCC 33909 / DSM 639 / JCM 8929 / NBRC 15157 / NCIMB 11770), this protein is Phosphoribosyl-ATP pyrophosphatase.